We begin with the raw amino-acid sequence, 663 residues long: Protein MICRORCHIDIA 6 (663 aa).

A disordered region spans residues 1–77; that stretch reads MSHDRSVNVS…PADDAGVTSS (77 aa). Polar residues predominate over residues 49–62; the sequence is SVGQSAGQSSTSVV. Residues 552–559 carry the Nuclear localization signal motif; it reads KRKEHPDS. The stretch at 614–659 forms a coiled coil; it reads DRKVRSQNLEVKAMNLRSELENYKSEYERLMVELQALDLVKDEHRR.

The protein belongs to the MORC ATPase protein family. In terms of assembly, homodimer and heterodimers with MORC1/CRT1 and MORC2. Interacts directly with SUVH9. Component of an RNA-directed DNA methylation (RdDM) complex that contains at least MORC6, MORC1/CRT1, MORC2, SWI3D and SUVH9. Stimulated by interaction with DMS3. Interacts with IDN2, SWI3B, SWI3C and SWI3D. Requires Mg(2+) as cofactor. Mn(2+) serves as cofactor.

The protein resides in the nucleus. Stimulated by DMS3. In terms of biological role, involved in RNA-directed DNA methylation (RdDM) as a component of the RdDM machinery and required for gene silencing. Together with SUVH2 and SUVH9, regulates the silencing of some transposable elements (TEs). Exhibits ATPase activity. May also be involved in the regulation of chromatin architecture/condensation to maintain gene silencing. Binds DNA/RNA in a non-specific manner and exhibits endonuclease activity. Probably involved in DNA repair. Positive regulator of defense against the oomycete Hyaloperonospora arabidopsidis (Hpa). The protein is Protein MICRORCHIDIA 6 of Arabidopsis thaliana (Mouse-ear cress).